The primary structure comprises 337 residues: ATP-dependent 6-phosphofructokinase (337 aa).

Glycine 11 contacts ATP. 21-25 (RAVVR) serves as a coordination point for ADP. ATP-binding positions include 72-73 (RY) and 102-105 (GDGS). Aspartate 103 serves as a coordination point for Mg(2+). 125-127 (TID) serves as a coordination point for substrate. Residue aspartate 127 is the Proton acceptor of the active site. An ADP-binding site is contributed by arginine 154. Substrate is bound by residues arginine 162 and 169–171 (MGR). ADP is bound by residues 185-187 (GAD), lysine 212, and 214-216 (KNH). Substrate-binding positions include glutamate 223, arginine 245, and 251–254 (HILR).

The protein belongs to the phosphofructokinase type A (PFKA) family. ATP-dependent PFK group I subfamily. Prokaryotic clade 'B1' sub-subfamily. In terms of assembly, homotetramer. Requires Mg(2+) as cofactor.

Its subcellular location is the cytoplasm. It catalyses the reaction beta-D-fructose 6-phosphate + ATP = beta-D-fructose 1,6-bisphosphate + ADP + H(+). Its pathway is carbohydrate degradation; glycolysis; D-glyceraldehyde 3-phosphate and glycerone phosphate from D-glucose: step 3/4. Its activity is regulated as follows. Allosterically activated by ADP and other diphosphonucleosides, and allosterically inhibited by phosphoenolpyruvate. In terms of biological role, catalyzes the phosphorylation of D-fructose 6-phosphate to fructose 1,6-bisphosphate by ATP, the first committing step of glycolysis. The protein is ATP-dependent 6-phosphofructokinase of Streptococcus pyogenes serotype M1.